The sequence spans 385 residues: Putative actin-25 (385 aa).

Belongs to the actin family.

It localises to the cytoplasm. The protein resides in the cytoskeleton. The enzyme catalyses ATP + H2O = ADP + phosphate + H(+). In terms of biological role, actins are highly conserved proteins that are involved in various types of cell motility and are ubiquitously expressed in all eukaryotic cells. Multiple isoforms are involved in various cellular functions such as cytoskeleton structure, cell mobility, chromosome movement and muscle contraction. This is Putative actin-25 (act25) from Dictyostelium discoideum (Social amoeba).